The primary structure comprises 237 residues: ATP synthase subunit a (237 aa).

5 helical membrane-spanning segments follow: residues 18–38, 77–97, 114–134, 167–187, and 208–230; these read LTLL…VYWA, SLFL…GLMA, NIAF…VEGI, LALR…LLVT, and AFSV…MYLG.

Belongs to the ATPase A chain family. F-type ATPases have 2 components, CF(1) - the catalytic core - and CF(0) - the membrane proton channel. CF(1) has five subunits: alpha(3), beta(3), gamma(1), delta(1), epsilon(1). CF(0) has three main subunits: a(1), b(2) and c(9-12). The alpha and beta chains form an alternating ring which encloses part of the gamma chain. CF(1) is attached to CF(0) by a central stalk formed by the gamma and epsilon chains, while a peripheral stalk is formed by the delta and b chains.

It is found in the cell membrane. Its function is as follows. Key component of the proton channel; it plays a direct role in the translocation of protons across the membrane. In Streptococcus gordonii (strain Challis / ATCC 35105 / BCRC 15272 / CH1 / DL1 / V288), this protein is ATP synthase subunit a.